Here is a 126-residue protein sequence, read N- to C-terminus: Large ribosomal subunit protein bL12 (126 aa).

This sequence belongs to the bacterial ribosomal protein bL12 family. Homodimer. Part of the ribosomal stalk of the 50S ribosomal subunit. Forms a multimeric L10(L12)X complex, where L10 forms an elongated spine to which 2 to 4 L12 dimers bind in a sequential fashion. Binds GTP-bound translation factors.

Its function is as follows. Forms part of the ribosomal stalk which helps the ribosome interact with GTP-bound translation factors. Is thus essential for accurate translation. This chain is Large ribosomal subunit protein bL12, found in Chlorobium phaeobacteroides (strain BS1).